Reading from the N-terminus, the 361-residue chain is Deoxyribonuclease-2-beta (361 aa).

Positions 1-27 are cleaved as a signal peptide; it reads MKQKMMARLLRTSFALLFLGLFGVLGA. N81, N103, N119, and N278 each carry an N-linked (GlcNAc...) asparagine glycan.

The protein belongs to the DNase II family. In terms of tissue distribution, highly expressed in the eye lens and in salivary gland. Detected at lower levels in lung, prostate and lymph node. Isoform 2 is lung specific.

The protein localises to the lysosome. The enzyme catalyses Endonucleolytic cleavage to nucleoside 3'-phosphates and 3'-phosphooligonucleotide end-products.. Hydrolyzes DNA under acidic conditions. Does not require divalent cations for activity. Participates in the degradation of nuclear DNA during lens cell differentiation. The protein is Deoxyribonuclease-2-beta (DNASE2B) of Homo sapiens (Human).